The chain runs to 325 residues: NADH-quinone oxidoreductase subunit H (325 aa).

8 consecutive transmembrane segments (helical) span residues 11–31 (ILLT…CGAF), 81–101 (VIFT…FAIV), 114–134 (IGIL…LFAG), 154–174 (LSYE…AGSF), 186–206 (VWNV…GVAV), 237–257 (FFVG…TLFF), 265–285 (LPPF…FILI), and 304–324 (ICLP…LWQA).

The protein belongs to the complex I subunit 1 family. As to quaternary structure, NDH-1 is composed of 13 different subunits. Subunits NuoA, H, J, K, L, M, N constitute the membrane sector of the complex.

Its subcellular location is the cell inner membrane. It catalyses the reaction a quinone + NADH + 5 H(+)(in) = a quinol + NAD(+) + 4 H(+)(out). NDH-1 shuttles electrons from NADH, via FMN and iron-sulfur (Fe-S) centers, to quinones in the respiratory chain. The immediate electron acceptor for the enzyme in this species is believed to be ubiquinone. Couples the redox reaction to proton translocation (for every two electrons transferred, four hydrogen ions are translocated across the cytoplasmic membrane), and thus conserves the redox energy in a proton gradient. This subunit may bind ubiquinone. This Escherichia coli O45:K1 (strain S88 / ExPEC) protein is NADH-quinone oxidoreductase subunit H.